The sequence spans 1049 residues: Carbamoyl phosphate synthase large chain (1049 aa).

The interval 1 to 399 (MRESVRKVLV…SLQKAVRMLD (399 aa)) is carboxyphosphate synthetic domain. ATP-binding residues include Arg127, Arg167, Gly173, Gly174, Lys206, Leu208, Glu213, Gly239, Val240, His241, Gln282, and Glu296. The region spanning 131-325 (RETMINVGLP…LAYVSAKLAL (195 aa)) is the ATP-grasp 1 domain. Positions 282, 296, and 298 each coordinate Mg(2+). Gln282, Glu296, and Asn298 together coordinate Mn(2+). The tract at residues 400–548 (IGEPGVVGGK…LTYNGTEDDI (149 aa)) is oligomerization domain. A carbamoyl phosphate synthetic domain region spans residues 549–930 (EFSEAGNKLL…LKSWLSSSPN (382 aa)). The ATP-grasp 2 domain occupies 674–864 (SKLLDKLGIK…IISLALDGIL (191 aa)). 10 residues coordinate ATP: Arg710, Lys749, Leu751, Glu756, Gly780, Val781, His782, Ser783, Gln823, and Glu835. Residues Gln823, Glu835, and Asn837 each coordinate Mg(2+). Gln823, Glu835, and Asn837 together coordinate Mn(2+). The MGS-like domain occupies 930–1049 (NKIPNKEGIA…YEISEYGAGI (120 aa)). The allosteric domain stretch occupies residues 931–1049 (KIPNKEGIAL…YEISEYGAGI (119 aa)).

Belongs to the CarB family. Composed of two chains; the small (or glutamine) chain promotes the hydrolysis of glutamine to ammonia, which is used by the large (or ammonia) chain to synthesize carbamoyl phosphate. Tetramer of heterodimers (alpha,beta)4. Mg(2+) serves as cofactor. It depends on Mn(2+) as a cofactor.

It catalyses the reaction hydrogencarbonate + L-glutamine + 2 ATP + H2O = carbamoyl phosphate + L-glutamate + 2 ADP + phosphate + 2 H(+). The catalysed reaction is hydrogencarbonate + NH4(+) + 2 ATP = carbamoyl phosphate + 2 ADP + phosphate + 2 H(+). Its pathway is amino-acid biosynthesis; L-arginine biosynthesis; carbamoyl phosphate from bicarbonate: step 1/1. It functions in the pathway pyrimidine metabolism; UMP biosynthesis via de novo pathway; (S)-dihydroorotate from bicarbonate: step 1/3. Its function is as follows. Large subunit of the glutamine-dependent carbamoyl phosphate synthetase (CPSase). CPSase catalyzes the formation of carbamoyl phosphate from the ammonia moiety of glutamine, carbonate, and phosphate donated by ATP, constituting the first step of 2 biosynthetic pathways, one leading to arginine and/or urea and the other to pyrimidine nucleotides. The large subunit (synthetase) binds the substrates ammonia (free or transferred from glutamine from the small subunit), hydrogencarbonate and ATP and carries out an ATP-coupled ligase reaction, activating hydrogencarbonate by forming carboxy phosphate which reacts with ammonia to form carbamoyl phosphate. This is Carbamoyl phosphate synthase large chain from Sulfurisphaera tokodaii (strain DSM 16993 / JCM 10545 / NBRC 100140 / 7) (Sulfolobus tokodaii).